The following is a 527-amino-acid chain: Tubulin-specific chaperone E (527 aa).

Ser2 bears the N-acetylserine mark. One can recognise a CAP-Gly domain in the interval 27–71 (GVVPPVAGPWLGVEWDNPERGKHDGSHEGTVYFKCRHPTGGSFIR). 7 LRR repeats span residues 154–175 (NIRKVDLSKNLLSSWDEVIHIA), 180–200 (HLEVLNVSENKLKFPSGSVLT), 205–226 (VLKVLVLNQTGITWAEVLRCVA), 230–252 (GLEELYLESNNIFISERPTDVLQ), 253–274 (TVKLLDLSSNQLIDENQLYLIA), 278–299 (RLEQLILSDTGISSLHFPDAGI), and 308–329 (SLKYLVVNDNQISQWSFFNELE). The region spanning 342-384 (NPLTKEDKEAETARLLIIASIGQLKTLNKCEILPEERRRAELD) is the LRRCT domain. The residue at position 463 (Lys463) is an N6-acetyllysine. Ser495 is modified (phosphoserine).

The protein belongs to the TBCE family. Supercomplex made of cofactors A to E. Cofactors A and D function by capturing and stabilizing tubulin in a quasi-native conformation. Cofactor E binds to the cofactor D-tubulin complex; interaction with cofactor C then causes the release of tubulin polypeptides that are committed to the native state. Cofactors B and E can form a heterodimer which binds to alpha-tubulin and enhances their ability to dissociate tubulin heterodimers. Interacts with TBCD.

The protein resides in the cytoplasm. Its subcellular location is the cytoskeleton. Functionally, tubulin-folding protein; involved in the second step of the tubulin folding pathway and in the regulation of tubulin heterodimer dissociation. Required for correct organization of microtubule cytoskeleton and mitotic splindle, and maintenance of the neuronal microtubule network. The sequence is that of Tubulin-specific chaperone E (TBCE) from Homo sapiens (Human).